A 310-amino-acid chain; its full sequence is Probable deoxyhypusine synthase (310 aa).

Catalysis depends on Lys284, which acts as the Nucleophile.

The protein belongs to the deoxyhypusine synthase family. The cofactor is NAD(+).

It carries out the reaction [eIF5A protein]-L-lysine + spermidine = [eIF5A protein]-deoxyhypusine + propane-1,3-diamine. Its pathway is protein modification; eIF5A hypusination. Catalyzes the NAD-dependent oxidative cleavage of spermidine and the subsequent transfer of the butylamine moiety of spermidine to the epsilon-amino group of a specific lysine residue of the eIF-5A precursor protein to form the intermediate deoxyhypusine residue. The chain is Probable deoxyhypusine synthase (dys) from Thermoplasma acidophilum (strain ATCC 25905 / DSM 1728 / JCM 9062 / NBRC 15155 / AMRC-C165).